Reading from the N-terminus, the 62-residue chain is MALDGSSGGGSNVETLLIVAIIVVIMAIMLYYFWWMPRQQQKKCSKAEECTCNNGSCSLKTS.

Residues leucine 16–methionine 36 traverse the membrane as a helical segment.

This sequence belongs to the asfivirus inner membrane protein p12 family. In terms of assembly, homomultimer; disulfide-linked. In terms of processing, not glycosylated.

The protein localises to the virion membrane. This African swine fever virus (isolate Tick/Malawi/Lil 20-1/1983) (ASFV) protein is Inner membrane protein p12.